Here is a 476-residue protein sequence, read N- to C-terminus: Serine/threonine-protein kinase Chk1 (476 aa).

The Protein kinase domain maps to 9–265 (WDLVQTLGEG…IPDIKKDRWY (257 aa)). ATP is bound by residues 15 to 23 (LGEGAYGEV) and Lys-38. Residue Asp-130 is the Proton acceptor of the active site. The disordered stretch occupies residues 272 to 329 (GTKRGRVSSGGVTESPGALPKHIRSDTDFSPVKSALGEDKASYSTSQPEPGTGGALWD). Ser-280 is modified (phosphoserine; by PKB/AKT1). Ser-296 carries the phosphoserine modification. Ser-317 is modified (phosphoserine; by ATM and ATR). Position 345 is a phosphoserine (Ser-345). Positions 391–476 (RSLRDVCEKM…STQKVWLPPP (86 aa)) are autoinhibitory region.

It belongs to the protein kinase superfamily. CAMK Ser/Thr protein kinase family. NIM1 subfamily. In terms of processing, phosphorylated by ATR in a RAD17-dependent manner in response to ultraviolet irradiation and inhibition of DNA replication. Phosphorylated by ATM in response to ionizing irradiation. Phosphorylation at Ser-345 induces a change in the conformation of the protein and activates the kinase activity. Phosphorylation at Ser-345 also increases binding to 14-3-3 proteins and promotes nuclear retention.

It is found in the nucleus. It localises to the chromosome. Its subcellular location is the cytoplasm. The protein localises to the cytoskeleton. The protein resides in the microtubule organizing center. It is found in the centrosome. It carries out the reaction L-seryl-[protein] + ATP = O-phospho-L-seryl-[protein] + ADP + H(+). The catalysed reaction is L-threonyl-[protein] + ATP = O-phospho-L-threonyl-[protein] + ADP + H(+). Activated through phosphorylation by atr or atm in response to DNA damage or inhibition of DNA replication. In terms of biological role, serine/threonine-protein kinase which is required for checkpoint-mediated cell cycle arrest and activation of DNA repair in response to the presence of DNA damage or unreplicated DNA. May also negatively regulate cell cycle progression during unperturbed cell cycles. This regulation is achieved by a number of mechanisms that together help to preserve the integrity of the genome. Recognizes the substrate consensus sequence [R-X-X-S/T]. Binds to and phosphorylates CDC25A, CDC25B and CDC25C. This inhibits their activity through proteasomal degradation, nucleo-cytoplasmic shuttling and inhibition by proteins of the 13-3-3 family. Inhibition of CDC25 leads to increased inhibitory tyrosine phosphorylation of CDK-cyclin complexes and blocks cell cycle progression. May promote DNA repair, regulate chromatin assembly and the transcription of genes that regulate cell-cycle progression. May also play a role in replication fork maintenance. The protein is Serine/threonine-protein kinase Chk1 (CHEK1) of Gallus gallus (Chicken).